A 652-amino-acid polypeptide reads, in one-letter code: Leucine-rich repeat-containing protein 4 (652 aa).

Residues 1-40 (MKLLWQVTVHHTWNAVLLPVVYLTAQVWILCAAIAAAASA) form the signal peptide. The LRRNT domain maps to 41–74 (GPQNCPSVCSCSNQFSKVVCTRRGLSEVPQGIPS). At 41-526 (GPQNCPSVCS…SLDEVMKTTK (486 aa)) the chain is on the extracellular side. 2 disulfide bridges follow: Cys-45–Cys-51 and Cys-49–Cys-60. 9 LRR repeats span residues 75 to 96 (NTRY…TFRH), 99 to 120 (HLEV…AFNG), 123 to 144 (SLNT…AFEY), 147 to 168 (KLRE…AFNR), 171 to 193 (SLMR…AFEG), 196 to 217 (NLKY…TPLV), 218 to 239 (GLEE…SFHG), 242 to 263 (SLKK…AFDG), and 266 to 287 (SLVE…LFTP). Residues Asn-276, Asn-321, Asn-362, Asn-387, Asn-409, Asn-433, Asn-439, and Asn-449 are each glycosylated (N-linked (GlcNAc...) asparagine). Residues 299 to 351 (NPWNCDCDILWLAWWLREYIPTNSTCCGRCHAPMHMRGRYLVEVDQAAFQCSA) form the LRRCT domain. 2 disulfides stabilise this stretch: Cys-303/Cys-328 and Cys-305/Cys-349. Positions 352–441 (PFIMDAPRDL…SNASAYLNVS (90 aa)) constitute an Ig-like domain. The cysteines at positions 373 and 423 are disulfide-linked. Residues 527–547 (IIIGCFVAVTLLAAAMLIVFY) form a helical membrane-spanning segment. Over 548-652 (KLRKRHQQRS…TKDKVQETQI (105 aa)) the chain is Cytoplasmic.

As to quaternary structure, interacts (via LRR repeats) with NTNG2. Interacts with DLG4. Forms a complex with DLG4 and with NMDA receptors. In terms of processing, N-glycosylated. Specifically expressed in brain. In the hippocampus, parietal cortex and piriform cortex expressed in proximal segments of CA1 pyramidal neurons.

Its subcellular location is the membrane. The protein resides in the postsynaptic cell membrane. Functionally, synaptic adhesion protein. Regulates the formation of exitatory synapses through the recruitment of pre-and-postsynaptic proteins. Organize the lamina/pathway-specific differentiation of dendrites. Plays an important role for auditory synaptic responses. Involved in the suppression of glioma. The chain is Leucine-rich repeat-containing protein 4 (Lrrc4) from Mus musculus (Mouse).